The following is a 160-amino-acid chain: Sec-independent protein translocase protein TatB (160 aa).

The helical transmembrane segment at 1–21 (MFGMGFFEILVVLVVAIIFLG) threads the bilayer. The disordered stretch occupies residues 118 to 160 (HLNEEVSNEEALNKEVSSDESPKEVQLATDNNTKEHDKEKENV). Basic and acidic residues-rich tracts occupy residues 128–140 (ALNKEVSSDESPK) and 149–160 (NTKEHDKEKENV).

It belongs to the TatB family. As to quaternary structure, the Tat system comprises two distinct complexes: a TatABC complex, containing multiple copies of TatA, TatB and TatC subunits, and a separate TatA complex, containing only TatA subunits. Substrates initially bind to the TatABC complex, which probably triggers association of the separate TatA complex to form the active translocon.

It localises to the cell inner membrane. Functionally, part of the twin-arginine translocation (Tat) system that transports large folded proteins containing a characteristic twin-arginine motif in their signal peptide across membranes. Together with TatC, TatB is part of a receptor directly interacting with Tat signal peptides. TatB may form an oligomeric binding site that transiently accommodates folded Tat precursor proteins before their translocation. The chain is Sec-independent protein translocase protein TatB from Helicobacter pylori (strain ATCC 700392 / 26695) (Campylobacter pylori).